The sequence spans 477 residues: 3-isopropylmalate dehydratase large subunit (477 aa).

Residues C352, C413, and C416 each coordinate [4Fe-4S] cluster.

The protein belongs to the aconitase/IPM isomerase family. LeuC type 1 subfamily. As to quaternary structure, heterodimer of LeuC and LeuD. [4Fe-4S] cluster serves as cofactor.

It carries out the reaction (2R,3S)-3-isopropylmalate = (2S)-2-isopropylmalate. It functions in the pathway amino-acid biosynthesis; L-leucine biosynthesis; L-leucine from 3-methyl-2-oxobutanoate: step 2/4. Its function is as follows. Catalyzes the isomerization between 2-isopropylmalate and 3-isopropylmalate, via the formation of 2-isopropylmaleate. The chain is 3-isopropylmalate dehydratase large subunit from Pseudomonas putida (strain GB-1).